The following is a 273-amino-acid chain: Ribosomal RNA small subunit methyltransferase A (273 aa).

Positions 18, 20, 45, 66, 91, and 113 each coordinate S-adenosyl-L-methionine.

Belongs to the class I-like SAM-binding methyltransferase superfamily. rRNA adenine N(6)-methyltransferase family. RsmA subfamily.

The protein resides in the cytoplasm. The enzyme catalyses adenosine(1518)/adenosine(1519) in 16S rRNA + 4 S-adenosyl-L-methionine = N(6)-dimethyladenosine(1518)/N(6)-dimethyladenosine(1519) in 16S rRNA + 4 S-adenosyl-L-homocysteine + 4 H(+). Its function is as follows. Specifically dimethylates two adjacent adenosines (A1518 and A1519) in the loop of a conserved hairpin near the 3'-end of 16S rRNA in the 30S particle. May play a critical role in biogenesis of 30S subunits. In Salmonella newport (strain SL254), this protein is Ribosomal RNA small subunit methyltransferase A.